The primary structure comprises 314 residues: Malate dehydrogenase (314 aa).

Residue 9 to 15 (IGVGNVG) participates in NAD(+) binding. Substrate-binding residues include Arg84 and Arg90. NAD(+) is bound by residues Asn97 and 120-122 (ISN). 2 residues coordinate substrate: Asn122 and Arg153. Residue His177 is the Proton acceptor of the active site.

The protein belongs to the LDH/MDH superfamily.

The catalysed reaction is (S)-malate + NAD(+) = oxaloacetate + NADH + H(+). Its function is as follows. Catalyzes the reversible oxidation of malate to oxaloacetate. This chain is Malate dehydrogenase, found in Aliarcobacter butzleri (strain RM4018) (Arcobacter butzleri).